A 147-amino-acid chain; its full sequence is uncharacterized protein (147 aa).

The next 2 membrane-spanning stretches (helical) occupy residues 4–26 (YLRV…FFWG) and 123–145 (YALC…RAYF).

Its subcellular location is the cell membrane. This is an uncharacterized protein from Treponema pallidum (strain Nichols).